A 368-amino-acid chain; its full sequence is tRNA/tmRNA (uracil-C(5))-methyltransferase (368 aa).

S-adenosyl-L-methionine-binding residues include glutamine 190, tyrosine 218, asparagine 223, glutamate 239, and aspartate 301. The active-site Nucleophile is cysteine 326. The active-site Proton acceptor is the glutamate 360.

The protein belongs to the class I-like SAM-binding methyltransferase superfamily. RNA M5U methyltransferase family. TrmA subfamily.

The enzyme catalyses uridine(54) in tRNA + S-adenosyl-L-methionine = 5-methyluridine(54) in tRNA + S-adenosyl-L-homocysteine + H(+). It catalyses the reaction uridine(341) in tmRNA + S-adenosyl-L-methionine = 5-methyluridine(341) in tmRNA + S-adenosyl-L-homocysteine + H(+). Its function is as follows. Dual-specificity methyltransferase that catalyzes the formation of 5-methyluridine at position 54 (m5U54) in all tRNAs, and that of position 341 (m5U341) in tmRNA (transfer-mRNA). In Aliivibrio salmonicida (strain LFI1238) (Vibrio salmonicida (strain LFI1238)), this protein is tRNA/tmRNA (uracil-C(5))-methyltransferase.